We begin with the raw amino-acid sequence, 171 residues long: ATP synthase subunit b (171 aa).

Residues 31–51 (FFVVLAIFLVVLAVIGTFVVP) form a helical membrane-spanning segment.

It belongs to the ATPase B chain family. As to quaternary structure, F-type ATPases have 2 components, F(1) - the catalytic core - and F(0) - the membrane proton channel. F(1) has five subunits: alpha(3), beta(3), gamma(1), delta(1), epsilon(1). F(0) has three main subunits: a(1), b(2) and c(10-14). The alpha and beta chains form an alternating ring which encloses part of the gamma chain. F(1) is attached to F(0) by a central stalk formed by the gamma and epsilon chains, while a peripheral stalk is formed by the delta and b chains.

It is found in the cell membrane. F(1)F(0) ATP synthase produces ATP from ADP in the presence of a proton or sodium gradient. F-type ATPases consist of two structural domains, F(1) containing the extramembraneous catalytic core and F(0) containing the membrane proton channel, linked together by a central stalk and a peripheral stalk. During catalysis, ATP synthesis in the catalytic domain of F(1) is coupled via a rotary mechanism of the central stalk subunits to proton translocation. In terms of biological role, component of the F(0) channel, it forms part of the peripheral stalk, linking F(1) to F(0). The polypeptide is ATP synthase subunit b (Mycobacterium bovis (strain ATCC BAA-935 / AF2122/97)).